We begin with the raw amino-acid sequence, 261 residues long: Sugar fermentation stimulation protein homolog (261 aa).

A disordered region spans residues 1–23; that stretch reads MTDSAKPQNPDPGHESRRVAPLA.

The protein belongs to the SfsA family.

In Syntrophobacter fumaroxidans (strain DSM 10017 / MPOB), this protein is Sugar fermentation stimulation protein homolog.